The chain runs to 875 residues: Transcription factor tenR (875 aa).

The zn(2)-C6 fungal-type DNA-binding region spans 16–44; sequence CSECRRRKIRCDRGFPCGPCRKSLPALSC. Disordered stretches follow at residues 54–73, 136–172, and 620–642; these read AASA…PKVN, DHEK…GVNP, and PHED…TGSR. 2 stretches are compositionally biased toward polar residues: residues 153–168 and 627–642; these read PGST…SHSA and SIQS…TGSR.

It is found in the nucleus. Transcription factor that positively regulates the expression of the genes that mediate the biosynthesis of tenellin-type 2-pyridones, iron-chelating compounds involved in iron stress tolerance, competition with the natural competitor fungus Metarhizium robertsii and insect hosts infection. The protein is Transcription factor tenR of Beauveria bassiana (strain ARSEF 2860) (White muscardine disease fungus).